The following is a 78-amino-acid chain: Small outer capsid protein (78 aa).

This sequence belongs to the Tevenvirinae Soc family. In terms of assembly, homotrimer. Interacts with the major capsid protein; three soc molecules associate with each interface between the major capsid protein facets.

The protein localises to the virion. Capsid decoration protein which helps to stabilize the capsid against extremes of pH and temperature. Once maturation and expansion of the capsid has occured, trimers of soc attach the interfaces between the hexamer of the major capsid protein. Acts as a 'glue' between neighboring hexameric capsomers. Dispensable for the head morphogenesis and phage infection. In Escherichia phage RB69 (Bacteriophage RB69), this protein is Small outer capsid protein.